A 429-amino-acid polypeptide reads, in one-letter code: Adenylosuccinate synthetase (429 aa).

GTP contacts are provided by residues 12 to 18 (GDEGKGK) and 40 to 42 (GHT). D13 serves as the catalytic Proton acceptor. 2 residues coordinate Mg(2+): D13 and G40. IMP-binding positions include 13–16 (DEGK), 38–41 (NAGH), T128, R142, Q223, T238, and R302. H41 serves as the catalytic Proton donor. Substrate is bound at residue 298–304 (VNTGRPR). Residues R304, 330 to 332 (KLD), and 412 to 414 (GVG) each bind GTP.

This sequence belongs to the adenylosuccinate synthetase family. Homodimer. Mg(2+) is required as a cofactor.

The protein resides in the cytoplasm. The enzyme catalyses IMP + L-aspartate + GTP = N(6)-(1,2-dicarboxyethyl)-AMP + GDP + phosphate + 2 H(+). Its pathway is purine metabolism; AMP biosynthesis via de novo pathway; AMP from IMP: step 1/2. Functionally, plays an important role in the de novo pathway of purine nucleotide biosynthesis. Catalyzes the first committed step in the biosynthesis of AMP from IMP. The polypeptide is Adenylosuccinate synthetase (Renibacterium salmoninarum (strain ATCC 33209 / DSM 20767 / JCM 11484 / NBRC 15589 / NCIMB 2235)).